We begin with the raw amino-acid sequence, 212 residues long: Ribosomal RNA large subunit methyltransferase E (212 aa).

S-adenosyl-L-methionine is bound by residues G57, W59, D77, D93, and D122. The Proton acceptor role is filled by K162.

Belongs to the class I-like SAM-binding methyltransferase superfamily. RNA methyltransferase RlmE family.

The protein localises to the cytoplasm. It carries out the reaction uridine(2552) in 23S rRNA + S-adenosyl-L-methionine = 2'-O-methyluridine(2552) in 23S rRNA + S-adenosyl-L-homocysteine + H(+). Its function is as follows. Specifically methylates the uridine in position 2552 of 23S rRNA at the 2'-O position of the ribose in the fully assembled 50S ribosomal subunit. This Coxiella burnetii (strain CbuK_Q154) (Coxiella burnetii (strain Q154)) protein is Ribosomal RNA large subunit methyltransferase E.